The primary structure comprises 94 residues: Integration host factor subunit beta (94 aa).

This sequence belongs to the bacterial histone-like protein family. In terms of assembly, heterodimer of an alpha and a beta chain.

Its function is as follows. This protein is one of the two subunits of integration host factor, a specific DNA-binding protein that functions in genetic recombination as well as in transcriptional and translational control. This chain is Integration host factor subunit beta, found in Roseobacter denitrificans (strain ATCC 33942 / OCh 114) (Erythrobacter sp. (strain OCh 114)).